A 197-amino-acid chain; its full sequence is Adenylate kinase (197 aa).

16 to 21 (GAGKGT) is a binding site for ATP. Positions 36–65 (STGDILRDHVARGTELGQQVKPILDAGHLV) are NMP. Residues Thr37, Arg42, 63–65 (HLV), 90–93 (GFPR), and Gln97 each bind AMP. Positions 131–147 (ERGNQAQARGEAVRSDD) are LID. Position 132 (Arg132) interacts with ATP. Positions 144 and 155 each coordinate AMP. Residue Gly183 participates in ATP binding.

It belongs to the adenylate kinase family. As to quaternary structure, monomer.

The protein localises to the cytoplasm. It carries out the reaction AMP + ATP = 2 ADP. Its pathway is purine metabolism; AMP biosynthesis via salvage pathway; AMP from ADP: step 1/1. Catalyzes the reversible transfer of the terminal phosphate group between ATP and AMP. Plays an important role in cellular energy homeostasis and in adenine nucleotide metabolism. In Deinococcus deserti (strain DSM 17065 / CIP 109153 / LMG 22923 / VCD115), this protein is Adenylate kinase.